The sequence spans 250 residues: Ubiquinone/menaquinone biosynthesis C-methyltransferase UbiE (250 aa).

Residues threonine 74, aspartate 94, 122-123 (DA), and serine 139 contribute to the S-adenosyl-L-methionine site.

It belongs to the class I-like SAM-binding methyltransferase superfamily. MenG/UbiE family.

The enzyme catalyses a 2-demethylmenaquinol + S-adenosyl-L-methionine = a menaquinol + S-adenosyl-L-homocysteine + H(+). It catalyses the reaction a 2-methoxy-6-(all-trans-polyprenyl)benzene-1,4-diol + S-adenosyl-L-methionine = a 5-methoxy-2-methyl-3-(all-trans-polyprenyl)benzene-1,4-diol + S-adenosyl-L-homocysteine + H(+). Its pathway is quinol/quinone metabolism; menaquinone biosynthesis; menaquinol from 1,4-dihydroxy-2-naphthoate: step 2/2. It functions in the pathway cofactor biosynthesis; ubiquinone biosynthesis. Functionally, methyltransferase required for the conversion of demethylmenaquinol (DMKH2) to menaquinol (MKH2) and the conversion of 2-polyprenyl-6-methoxy-1,4-benzoquinol (DDMQH2) to 2-polyprenyl-3-methyl-6-methoxy-1,4-benzoquinol (DMQH2). The sequence is that of Ubiquinone/menaquinone biosynthesis C-methyltransferase UbiE from Cereibacter sphaeroides (strain ATCC 17029 / ATH 2.4.9) (Rhodobacter sphaeroides).